The primary structure comprises 507 residues: MAGQPLACQLQEEVTCPICMEILQDPVTIDCGHNFCLQCISQVGKTSEKIQCPLCKLSVNKNTFRPNKLLASLAEKIQSMDPADIQAEKEDSRCQRHKEKLHYFCEQDGAFLCVVCRDSKDHKSHNVTLIDEAAQNYKVQIESQAQDLGQKDKKIIEEKKQGEGAIWAFRAQVDLEKLKIHEEFKLLRQRLDEEESFLLSRLDWLEQQGAKQLRQYVTVTEKQLNSLRKLTKSLKIRLQSSSMELLKDIKDALSRGKEFQFLNPNPVPEDLEKKCSEAKARHESIIKTLTELKDDMNAEGKRDKSAFMNSLNKEEKESWSLLQKNNSVLPTSVPVTLDKSSADPDLTFSQDLKKVTLYIVAGKASNRQAKPRPFYPFHCVRGSPGLSSGRQVWEAEIRGPSGGACIVGVVTELARGAQSQTVSAQSYIWALRISPSGCQPFTNCKAQEYLQVCLKKVGVYVNHDCGEVVFYDAITSKHIYTFQTSFDGKVFPLFGLQVACSHITLSP.

The RING-type zinc finger occupies 16 to 56; that stretch reads CPICMEILQDPVTIDCGHNFCLQCISQVGKTSEKIQCPLCK. The segment at 89–130 adopts a B box-type zinc-finger fold; that stretch reads KEDSRCQRHKEKLHYFCEQDGAFLCVVCRDSKDHKSHNVTLI. Positions 94, 97, 116, and 122 each coordinate Zn(2+). Coiled coils occupy residues 176-241 and 269-298; these read EKLK…LQSS and EDLE…DMNA. The B30.2/SPRY domain maps to 315-507; that stretch reads EKESWSLLQK…VACSHITLSP (193 aa).

Belongs to the TRIM/RBCC family. May form oligomers. Interacts with isoform p52shc of SHC1. Post-translationally, auto-ubiquitinated (in vitro). In terms of tissue distribution, highly expressed in the gastrointestrinal tract, with high expression in the small intestine, moderate in the large intestine and weak in the stomach and esophagus.

It localises to the cytoplasm. Its subcellular location is the mitochondrion. It catalyses the reaction S-ubiquitinyl-[E2 ubiquitin-conjugating enzyme]-L-cysteine + [acceptor protein]-L-lysine = [E2 ubiquitin-conjugating enzyme]-L-cysteine + N(6)-ubiquitinyl-[acceptor protein]-L-lysine.. Its pathway is protein modification; protein ubiquitination. In terms of biological role, E3 ubiquitin-protein ligase that acts as a regulator of antiviral immune response and inflammation by mediating ubiquitination of substrates. Acts as a regulator of innate immune defense against viruses by mediating 'Lys-63'-linked ubiquitination of MAVS, promoting MAVS polymerization and formation of three-stranded helical filaments on mitochondria. Acts as a negative regulator of the NLRP3 inflammasome by catalyzing 'Lys-48'-linked ubiquitination of NLRP3, leading to its degradation. Regulator of Src-induced anchorage independent cell growth. The chain is E3 ubiquitin-protein ligase TRIM31 from Mus musculus (Mouse).